Here is a 248-residue protein sequence, read N- to C-terminus: Probable transcriptional regulatory protein Ccel_0181 (248 aa).

It belongs to the TACO1 family.

The protein resides in the cytoplasm. The sequence is that of Probable transcriptional regulatory protein Ccel_0181 from Ruminiclostridium cellulolyticum (strain ATCC 35319 / DSM 5812 / JCM 6584 / H10) (Clostridium cellulolyticum).